We begin with the raw amino-acid sequence, 211 residues long: MAVPEETEKKARDVNEKTALLKKKSATELGELATSINTIARDAHMEANLEMEIVPQGLRVLIKDDQNRNMFERGSAKIMPFFKTLLVELAPVFDSLDNKIIITGHTDAMAYKNNIYNNWNLSGDRALSARRVLEEAGMPEDKVMQVSAMADQMLLDSKNPQSAGNRRIEIMVLTKSASDTLYQYFGQHGDKVVQPLVQKLDKQQVLSQRTR.

Residues 58-176 form the OmpA-like domain; that stretch reads LRVLIKDDQN…RIEIMVLTKS (119 aa).

It belongs to the MotB family.

The sequence is that of Putative truncated flagellar export/assembly protein LafU from Escherichia coli (strain K12).